Here is a 154-residue protein sequence, read N- to C-terminus: Myoglobin (154 aa).

The region spanning 2–148 (GLSDGEWQLV…FRNDIAAKYK (147 aa)) is the Globin domain. Ser4 is subject to Phosphoserine. His65 is a binding site for nitrite. His65 lines the O2 pocket. The residue at position 68 (Thr68) is a Phosphothreonine. His94 contacts heme b.

The protein belongs to the globin family. As to quaternary structure, monomeric.

Its subcellular location is the cytoplasm. It localises to the sarcoplasm. The enzyme catalyses Fe(III)-heme b-[protein] + nitric oxide + H2O = Fe(II)-heme b-[protein] + nitrite + 2 H(+). It catalyses the reaction H2O2 + AH2 = A + 2 H2O. Its function is as follows. Monomeric heme protein which primary function is to store oxygen and facilitate its diffusion within muscle tissues. Reversibly binds oxygen through a pentacoordinated heme iron and enables its timely and efficient release as needed during periods of heightened demand. Depending on the oxidative conditions of tissues and cells, and in addition to its ability to bind oxygen, it also has a nitrite reductase activity whereby it regulates the production of bioactive nitric oxide. Under stress conditions, like hypoxia and anoxia, it also protects cells against reactive oxygen species thanks to its pseudoperoxidase activity. This Lutra lutra (European river otter) protein is Myoglobin (MB).